The following is a 943-amino-acid chain: Isoleucine--tRNA ligase (943 aa).

The 'HIGH' region signature appears at 59-69 (PYANGQIHLGH). L-isoleucyl-5'-AMP is bound at residue glutamate 577. The 'KMSKS' region signature appears at 618–622 (KMSKS). Lysine 621 is an ATP binding site. Residues cysteine 906, cysteine 909, cysteine 926, and cysteine 929 each contribute to the Zn(2+) site.

It belongs to the class-I aminoacyl-tRNA synthetase family. IleS type 1 subfamily. As to quaternary structure, monomer. Requires Zn(2+) as cofactor.

Its subcellular location is the cytoplasm. The catalysed reaction is tRNA(Ile) + L-isoleucine + ATP = L-isoleucyl-tRNA(Ile) + AMP + diphosphate. Catalyzes the attachment of isoleucine to tRNA(Ile). As IleRS can inadvertently accommodate and process structurally similar amino acids such as valine, to avoid such errors it has two additional distinct tRNA(Ile)-dependent editing activities. One activity is designated as 'pretransfer' editing and involves the hydrolysis of activated Val-AMP. The other activity is designated 'posttransfer' editing and involves deacylation of mischarged Val-tRNA(Ile). The sequence is that of Isoleucine--tRNA ligase from Xylella fastidiosa (strain 9a5c).